Reading from the N-terminus, the 359-residue chain is Ferredoxin--NADP reductase (359 aa).

The FAD site is built by aspartate 48, glutamine 56, tyrosine 61, alanine 101, phenylalanine 139, aspartate 304, and serine 345.

It belongs to the ferredoxin--NADP reductase type 2 family. In terms of assembly, homodimer. FAD is required as a cofactor.

The enzyme catalyses 2 reduced [2Fe-2S]-[ferredoxin] + NADP(+) + H(+) = 2 oxidized [2Fe-2S]-[ferredoxin] + NADPH. In Ralstonia pickettii (strain 12J), this protein is Ferredoxin--NADP reductase.